A 74-amino-acid chain; its full sequence is Sec-independent protein translocase protein TatA (74 aa).

The helical transmembrane segment at 1 to 21 threads the bilayer; it reads MGTFSIWHWLIVLLVVVVVFG. The tract at residues 50 to 74 is disordered; sequence TAPAGQVANQSTADQTIDVQTKPKG. Positions 56–68 are enriched in polar residues; the sequence is VANQSTADQTIDV.

This sequence belongs to the TatA/E family. The Tat system comprises two distinct complexes: a TatABC complex, containing multiple copies of TatA, TatB and TatC subunits, and a separate TatA complex, containing only TatA subunits. Substrates initially bind to the TatABC complex, which probably triggers association of the separate TatA complex to form the active translocon.

It localises to the cell inner membrane. Functionally, part of the twin-arginine translocation (Tat) system that transports large folded proteins containing a characteristic twin-arginine motif in their signal peptide across membranes. TatA could form the protein-conducting channel of the Tat system. This Verminephrobacter eiseniae (strain EF01-2) protein is Sec-independent protein translocase protein TatA.